Here is a 548-residue protein sequence, read N- to C-terminus: Acetylcholine receptor subunit alpha-type des-2 (548 aa).

The N-terminal stretch at 1–19 (MLIIIQSLLLATTASLCIA) is a signal peptide. Topologically, residues 21 to 239 (TPVPTQIRLV…LTLYLRRKPL (219 aa)) are extracellular. Residues Asn-52, Asn-96, and Asn-224 are each glycosylated (N-linked (GlcNAc...) asparagine). 3 helical membrane-spanning segments follow: residues 240-260 (FYLVNLIIPTSIITLIAIVGF), 274-294 (VSLGITTLLSMSILMLMVSDQ), and 301-321 (FIPLIGWFILAMIIVISLGTV). Residues 422 to 460 (LIHLSPTAHQPDESISPSAPPVPSSSPLPPPLTPGPADD) form a disordered region. Over residues 439 to 455 (SAPPVPSSSPLPPPLTP) the composition is skewed to pro residues. Residues 517 to 537 (FVIFVVAFLIITFGINFIGFI) form a helical membrane-spanning segment. Residues 538 to 548 (HWHQAGVEYGG) are Cytoplasmic-facing.

This sequence belongs to the ligand-gated ion channel (TC 1.A.9) family. Acetylcholine receptor (TC 1.A.9.1) subfamily. As to quaternary structure, the functional receptor is a heteromer of deg-3 and des-2. Interacts with ric-3; which is required for proper receptor folding.

The protein resides in the cell membrane. Its function is as follows. Subunit of the non-synaptic neuronal acetylcholine receptor (AChR), which may play a role in chemotaxis towards choline. After binding choline or acetylcholine, the AChR responds by an extensive change in conformation that affects all subunits and leads to opening of an ion-conducting channel across the plasma membrane. This chain is Acetylcholine receptor subunit alpha-type des-2 (des-2), found in Caenorhabditis elegans.